We begin with the raw amino-acid sequence, 448 residues long: MAAQIKKYITSDELKNHDKPGDLWISIQGKAYDVSDWVKDHPGGSFPLKSLAGQEVTDAFVAFHPASTWKNLDKFFTGYYLKDYSVSEVSKDYRKLVFEFSKMGLYDKKGHIMFATLCFIAMLFAMSVYGVLFCEGVLVHLFSGCLMGFLWIQSGWIGHDAGHYMVVSDSRLNKFMGIFAANCLSGISIGWWKWNHNAHHIACNSLEYDPDLQYIPFLVVSSKFFGSLTSHFYEKRLTFDSLSRFFVSYQHWTFYPIMCAARLNMYVQSLIMLLTKRNVSYRAHELLGCLVFSIWYPLLVSCLPNWGERIMFVIASLSVTGMQQVQFSLNHFSSSVYVGKPKGNNWFEKQTDGTLDISCPPWMDWFHGGLQFQIEHHLFPKMPRCNLRKISPYVIELCKKHNLPYNYASFSKANEMTLRTLRNTALQARDITKPLPKNLVWEALHTHG.

The 85-residue stretch at 6–90 (KKYITSDELK…LKDYSVSEVS (85 aa)) folds into the Cytochrome b5 heme-binding domain. Heme-binding residues include His41 and His64. Helical transmembrane passes span 112 to 132 (IMFA…YGVL) and 137 to 157 (VLVH…SGWI). The Histidine box-1 motif lies at 159-163 (HDAGH). A helical membrane pass occupies residues 172–192 (LNKFMGIFAANCLSGISIGWW). The short motif at 196–200 (HNAHH) is the Histidine box-2 element. 3 helical membrane passes run 212-232 (LQYI…TSHF), 254-274 (FYPI…IMLL), and 286-306 (LLGC…LPNW). Residues 373 to 377 (QIEHH) carry the Histidine box-3 motif.

This sequence belongs to the fatty acid desaturase type 1 family.

Its subcellular location is the endoplasmic reticulum membrane. The catalysed reaction is (9Z,12Z,15Z)-octadecatrienoyl-containing glycerolipid + 2 Fe(II)-[cytochrome b5] + O2 + 2 H(+) = (6Z,9Z,12Z,15Z)-octadecatetraenoyl-containing glycerolipid + 2 Fe(III)-[cytochrome b5] + 2 H2O. The enzyme catalyses a (9Z,12Z)-octadecadienoyl-containing glycerolipid + 2 Fe(II)-[cytochrome b5] + O2 + 2 H(+) = (6Z,9Z,12Z)-octadecatrienoyl-containing glycerolipid + 2 Fe(III)-[cytochrome b5] + 2 H2O. Its pathway is lipid metabolism; polyunsaturated fatty acid biosynthesis. Functionally, fatty acid desaturase able to introduce a delta(6)-double bond into delta(9)-unsaturated fatty-acid substrates. Can use both linoleic acid (18:2(9Z,12Z)) and alpha-linolenic acid (18:3(9Z,12Z,15Z)) as substrates. The protein is Acyl-lipid (9-3)-desaturase of Borago officinalis (Bourrache).